A 158-amino-acid polypeptide reads, in one-letter code: SsrA-binding protein (158 aa).

The protein belongs to the SmpB family.

Its subcellular location is the cytoplasm. Its function is as follows. Required for rescue of stalled ribosomes mediated by trans-translation. Binds to transfer-messenger RNA (tmRNA), required for stable association of tmRNA with ribosomes. tmRNA and SmpB together mimic tRNA shape, replacing the anticodon stem-loop with SmpB. tmRNA is encoded by the ssrA gene; the 2 termini fold to resemble tRNA(Ala) and it encodes a 'tag peptide', a short internal open reading frame. During trans-translation Ala-aminoacylated tmRNA acts like a tRNA, entering the A-site of stalled ribosomes, displacing the stalled mRNA. The ribosome then switches to translate the ORF on the tmRNA; the nascent peptide is terminated with the 'tag peptide' encoded by the tmRNA and targeted for degradation. The ribosome is freed to recommence translation, which seems to be the essential function of trans-translation. In Buchnera aphidicola subsp. Baizongia pistaciae (strain Bp), this protein is SsrA-binding protein.